Reading from the N-terminus, the 308-residue chain is Cytochrome b (308 aa).

Helical transmembrane passes span 1–21, 45–66, 81–101, and 146–166; these read FGSLLGICLATQIITGLLMAM, WLIRNLHANGASMFFICIYLHI, WNTGVILLLTLMATAFVGYVL, and FFALHFLLPFIITGLTLVHLT. Positions 51 and 65 each coordinate heme b. The heme b site is built by histidine 150 and histidine 164. Position 169 (histidine 169) interacts with a ubiquinone. 3 helical membrane-spanning segments follow: residues 194 to 214, 256 to 276, and 288 to 308; these read IKDILGFMAMLLPLMSLAMFS, LGGVLALAASVLILFLIPFLH, and LSQLMFWILVANLLILTWVGS.

This sequence belongs to the cytochrome b family. As to quaternary structure, the cytochrome bc1 complex contains 11 subunits: 3 respiratory subunits (MT-CYB, CYC1 and UQCRFS1), 2 core proteins (UQCRC1 and UQCRC2) and 6 low-molecular weight proteins (UQCRH/QCR6, UQCRB/QCR7, UQCRQ/QCR8, UQCR10/QCR9, UQCR11/QCR10 and a cleavage product of UQCRFS1). This cytochrome bc1 complex then forms a dimer. Heme b is required as a cofactor.

Its subcellular location is the mitochondrion inner membrane. Functionally, component of the ubiquinol-cytochrome c reductase complex (complex III or cytochrome b-c1 complex) that is part of the mitochondrial respiratory chain. The b-c1 complex mediates electron transfer from ubiquinol to cytochrome c. Contributes to the generation of a proton gradient across the mitochondrial membrane that is then used for ATP synthesis. The sequence is that of Cytochrome b (MT-CYB) from Scytalopus magellanicus (Magellanic tapaculo).